Here is a 192-residue protein sequence, read N- to C-terminus: Peroxiredoxin tpx1 (192 aa).

One can recognise a Thioredoxin domain in the interval Leu3 to Phe161. The active-site Cysteine sulfenic acid (-SOH) intermediate is the Cys48. Ser105 and Ser148 each carry phosphoserine.

The protein belongs to the peroxiredoxin family. AhpC/Prx1 subfamily. Homodimer; disulfide-linked, upon oxidation. Interacts with srx1 in response to oxidative stress. Interacts with pap1 via transient disulfide linkages. In terms of processing, the enzyme can be inactivated by further oxidation of the cysteine sulfenic acid (C(P)-SOH) to sulphinic acid (C(P)-SO2H) instead of its condensation to a disulfide bond. It can be reactivated by forming a transient disulfide bond with sulfiredoxin srx1, which reduces the cysteine sulfinic acid in an ATP- and Mg-dependent manner.

Its subcellular location is the cytoplasm. The protein localises to the nucleus. The enzyme catalyses a hydroperoxide + [thioredoxin]-dithiol = an alcohol + [thioredoxin]-disulfide + H2O. Its function is as follows. Thiol-specific peroxidase that catalyzes the reduction of hydrogen peroxide and organic hydroperoxides to water and alcohols, respectively. Plays a role in cell protection against oxidative stress by detoxifying peroxides and as sensor of hydrogen peroxide-mediated signaling events. Relays hydrogen peroxide as a signal to the transcription factor pap1 by inducing the formation of intramolecular disulfide bonds in pap1, which causes its nuclear accumulation and activation. Reduced by srx1 and this regulation acts as a molecular switch controlling the transcriptional response to hydrogen peroxide. The protein is Peroxiredoxin tpx1 (tpx1) of Schizosaccharomyces pombe (strain 972 / ATCC 24843) (Fission yeast).